We begin with the raw amino-acid sequence, 194 residues long: ATP-dependent Clp protease proteolytic subunit (194 aa).

Serine 98 functions as the Nucleophile in the catalytic mechanism. Residue histidine 123 is part of the active site.

The protein belongs to the peptidase S14 family. In terms of assembly, component of the chloroplastic Clp protease core complex.

The protein localises to the plastid. It is found in the cyanelle. The catalysed reaction is Hydrolysis of proteins to small peptides in the presence of ATP and magnesium. alpha-casein is the usual test substrate. In the absence of ATP, only oligopeptides shorter than five residues are hydrolyzed (such as succinyl-Leu-Tyr-|-NHMec, and Leu-Tyr-Leu-|-Tyr-Trp, in which cleavage of the -Tyr-|-Leu- and -Tyr-|-Trp bonds also occurs).. Its function is as follows. Cleaves peptides in various proteins in a process that requires ATP hydrolysis. Has a chymotrypsin-like activity. Plays a major role in the degradation of misfolded proteins. This is ATP-dependent Clp protease proteolytic subunit (clpP-A) from Cyanophora paradoxa.